The sequence spans 382 residues: MKSGVIPSSAVGQKINEWYRYIRTFSVPDAEVLKAEIQQELKHMQHDSNLLLYYSLMEFRHQLMLDYLEPLEKLNIEDQPSLSELSRNIDSNQADLKGLLDYYVNFFRGMYEFDKREFISAITYYKQAEKKLSFVADHIERAEFYFKIAEAYYYMKQTYFSLINIKNAYEIYVEQETYNVRIIQCHFVFGVNLMDERNFEQAARHFKLALNMAQAEQKAQLVGRAYYNLGLCYYNQDLLDPAIDYFEKAVSTFESSRIVNSLPQAYFLITLIYYKQGKHDKASEYHKRGYEYAKETDDADYAVKFEFLQSLYLDQPNEEGIERCFQYLKNKNMYADIEDLALEVAKYYYEQKWFKLSASYFLQVEEARKQIQRSEGLYEIEI.

TPR repeat units follow at residues 102-138 (YYVN…VADH), 149-182 (AEAY…NVRI), 183-216 (IQCH…AQAE), 223-256 (GRAY…FESS), and 263-296 (PQAY…AKET).

This sequence belongs to the Rap family. As to quaternary structure, homodimer. Interacts specifically with the C-terminal DNA-binding domain of ComA. Interacts with CSF.

It localises to the cytoplasm. Inhibited by the competence and sporulation stimulating factor (CSF), encoded by phrC, which prevents RapC-ComA interaction. Involved in the regulation of genetic competence development. Inhibits the activity of ComA, a transcriptional factor that regulates the development of genetic competence. Acts by binding to ComA, independently of its phosphorylation state, leading to the inhibition of ComA DNA-binding activity. Does not dephosphorylate phospho-ComA and does not affect the phosphorylation level of the ComP-ComA system. The protein is Regulatory protein RapC (rapC) of Bacillus subtilis (strain 168).